Here is a 287-residue protein sequence, read N- to C-terminus: Inositol-1-monophosphatase (287 aa).

Residues E79, D96, L98, and D99 each contribute to the Mg(2+) site. Position 79 (E79) interacts with substrate. Substrate-binding positions include 98 to 101 (LDGT), R195, and D224. D224 contributes to the Mg(2+) binding site.

It belongs to the inositol monophosphatase superfamily. Mg(2+) serves as cofactor.

It carries out the reaction a myo-inositol phosphate + H2O = myo-inositol + phosphate. This Synechocystis sp. (strain ATCC 27184 / PCC 6803 / Kazusa) protein is Inositol-1-monophosphatase (suhB).